The following is a 179-amino-acid chain: Viral interleukin-10 homolog (179 aa).

The N-terminal stretch at 1 to 18 (MFRASLLCCLVLLAGVWA) is a signal peptide. Disulfide bonds link Cys30–Cys127 and Cys80–Cys133. Residues Asn100 and Asn135 are each glycosylated (N-linked (GlcNAc...) asparagine; by host).

This sequence belongs to the IL-10 family.

The protein resides in the secreted. Functionally, down-regulates the expression of the TAP1 gene (transporter associated with antigen processing), thereby affecting the transport of peptides into the endoplasmic reticulum and subsequent peptide loading by MHC class I molecules. In consequence, infected cells are masked for immune recognition by cytotoxic T-lymphocytes. This is Viral interleukin-10 homolog from Equus caballus (Horse).